We begin with the raw amino-acid sequence, 955 residues long: Anoctamin-4 (955 aa).

Residues 1-352 (MEASSSGITN…FGEKIGLYFA (352 aa)) are Cytoplasmic-facing. The interval 73–97 (KDDDSLLHPGNLTSTSEDTSRLEAG) is disordered. Residues 353–373 (WLGWYTGMLFPAAFIGLFVFL) traverse the membrane as a helical segment. At 374-424 (YGVTTLDHCQVSKEVCQATDIIMCPVCDKYCPFMRLSDSCVYAKVTHLFDN) the chain is on the extracellular side. The chain crosses the membrane as a helical span at residues 425–445 (GATVFFAVFMAVWATVFLEFW). At 446-505 (KRRRAVIAYDWDLIDWEEEEEEIRPQFEAKYSKKERMNPISGKPEPYQAFTDKCSRLIVS) the chain is on the cytoplasmic side. A helical transmembrane segment spans residues 506 to 526 (ASGIFFMICVVIAAVFGIVIY). Residues 527-547 (RVVTVSTFAAFKWALIRNNSQ) are Extracellular-facing. The N-linked (GlcNAc...) asparagine glycan is linked to N544. The helical transmembrane segment at 548–568 (VATTGTAVCINFCIIMLLNVL) threads the bilayer. Residues 569-595 (YEKVALLLTNLEQPRTESEWENSFTLK) are Cytoplasmic-facing. A helical membrane pass occupies residues 596–616 (MFLFQFVNLNSSTFYIAFFLG). Over 617–715 (RFTGHPGAYL…AYGLFDEYLE (99 aa)) the chain is Extracellular. Residues 716–736 (MILQFGFTTIFVAAFPLAPLL) traverse the membrane as a helical segment. Topologically, residues 737-768 (ALLNNIIEIRLDAYKFVTQWRRPLASRAKDIG) are cytoplasmic. Residues 769-789 (IWYGILEGIGILSVITNAFVI) form a helical membrane-spanning segment. Residues 790-885 (AITSDFIPRL…QFWHVLAARL (96 aa)) lie on the Extracellular side of the membrane. N-linked (GlcNAc...) asparagine glycans are attached at residues N824 and N837. The chain crosses the membrane as a helical span at residues 886–906 (AFIIVFEHLVFCIKHLISYLI). The Cytoplasmic segment spans residues 907–955 (PDLPKDLRDRMRREKYLIQEMMYEAELERLQKERKERKKNGKAHHNEWP).

The protein belongs to the anoctamin family. Predominantly expressed in neuronal tissues. Expressed at low levels in ovary, uterus, heart and brain.

It localises to the cell membrane. It catalyses the reaction a 1,2-diacyl-sn-glycero-3-phospho-L-serine(in) = a 1,2-diacyl-sn-glycero-3-phospho-L-serine(out). It carries out the reaction a beta-D-galactosyl-(1&lt;-&gt;1')-N-acylsphing-4-enine(out) = a beta-D-galactosyl-(1&lt;-&gt;1')-N-acylsphing-4-enine(in). The catalysed reaction is a 1,2-diacyl-sn-glycero-3-phosphocholine(in) = a 1,2-diacyl-sn-glycero-3-phosphocholine(out). In terms of biological role, has calcium-dependent phospholipid scramblase activity; scrambles phosphatidylserine, phosphatidylcholine and galactosylceramide. Does not exhibit calcium-activated chloride channel (CaCC) activity. This chain is Anoctamin-4, found in Mus musculus (Mouse).